Reading from the N-terminus, the 854-residue chain is Protein asteroid (854 aa).

The disordered stretch occupies residues 368 to 427 (SEEECSDDEHSSSSDEKFSDVEEGEDQEEADNQDEEQQEENQDVDSGDEEEEEADEGLEL). The segment covering 375–387 (DEHSSSSDEKFSD) has biased composition (basic and acidic residues). A compositionally biased stretch (acidic residues) spans 388–427 (VEEGEDQEEADNQDEEQQEENQDVDSGDEEEEEADEGLEL).

It belongs to the asteroid family. As to expression, expressed in the proliferative tissues of embryos and in the mitotically active tissue anterior to the morphogenetic furrow in eye imaginal disks.

Its function is as follows. May function in EGF receptor signaling. May play a role in compound eye morphogenesis. The chain is Protein asteroid (ast) from Drosophila melanogaster (Fruit fly).